A 158-amino-acid chain; its full sequence is Small ribosomal subunit protein bS6 (158 aa).

The interval 98 to 158 (EAPSAPLARR…DRDEDQNEEN (61 aa)) is disordered. 2 stretches are compositionally biased toward basic and acidic residues: residues 106–117 (RRGEDRDRDRGF) and 127–150 (DSGR…RSDR).

Belongs to the bacterial ribosomal protein bS6 family.

Binds together with bS18 to 16S ribosomal RNA. The polypeptide is Small ribosomal subunit protein bS6 (Acidiphilium cryptum (strain JF-5)).